The chain runs to 472 residues: MKSELIFLPVPAFGHLVGMVEMAKLFISRHENLSVTVLISKFFIDTGIDNYNKSLLAKPTPRLTIINLPEIDPQKYLLKPRCAIFPSLIENQKTHVRDVMSRMTQSESTRVVGLLADILFVDIFDIADEFNVPTYVYSPAGAGFLGLAFHLQTLNDDKKQDVTEFRNSDTELLVPSFANPVPAEFLPSIFLEKDGRHDVLLSLYWRCREAKGIIVNTFEELEPYAINSLRMDSMIPPIYPVGPILNLNGEGQNSDEAAVILGWLDDQPPSSVVFLCFGSFGSFPENQVKEIAMGLERSGHRFLWSLRPCISEGETTLQLKYSNLELPAGFLDRTSCVGKVIGWAPQMAILAHEAVGGFVSHCGWNSVLESVWYGMPVATWPMYGEQQLNAFEMVKELGLAVEIEVDYRNEYNKSDFIVKADEIETKIKKLMMDGKNSKIRKKVKEMKEKSRVAMSENGSSYTSLAKLFEEIM.

The active-site Proton acceptor is the H15. H15 contributes to the an anthocyanidin binding site. Residue D117 is the Charge relay of the active site. Positions 344, 346, 361, 364, 365, 366, and 369 each coordinate UDP-alpha-D-glucose. G384 serves as a coordination point for an anthocyanidin. UDP-alpha-D-glucose is bound by residues E385 and Q386.

The protein belongs to the UDP-glycosyltransferase family.

The catalysed reaction is (20S)-protopanaxadiol + UDP-alpha-D-glucose = (20S)-ginsenoside C-K + UDP + H(+). The enzyme catalyses (20S)-protopanaxatriol + UDP-alpha-D-glucose = (20S)-ginsenoside Rh1 + UDP + H(+). It catalyses the reaction (20S)-ginsenoside F1 + UDP-alpha-D-glucose = (20S)-ginsenoside Rg1 + UDP + H(+). Its pathway is secondary metabolite biosynthesis; terpenoid biosynthesis. Functionally, component of the dammarane-type triterpene saponins (e.g. PPT-type ginsenosides or panaxosides) biosynthetic pathway. Glycosyltransferase that catalyzes the biosynthesis of ginsenoside Rh1 from protopanaxatriol (PPT) and the conversion of ginsenoside F1 to ginsenoside Rg1. This is UDP-glycosyltransferase 100 from Panax ginseng (Korean ginseng).